A 187-amino-acid polypeptide reads, in one-letter code: Elongation factor P (187 aa).

Belongs to the elongation factor P family.

It is found in the cytoplasm. Its pathway is protein biosynthesis; polypeptide chain elongation. Involved in peptide bond synthesis. Stimulates efficient translation and peptide-bond synthesis on native or reconstituted 70S ribosomes in vitro. Probably functions indirectly by altering the affinity of the ribosome for aminoacyl-tRNA, thus increasing their reactivity as acceptors for peptidyl transferase. This chain is Elongation factor P, found in Synechococcus sp. (strain CC9311).